An 867-amino-acid chain; its full sequence is Pentatricopeptide repeat-containing protein At2g39230, mitochondrial (867 aa).

The N-terminal 49 residues, 1-49 (MTTFMVSKRFRPPIFLHRFINPKPISSQTRFLHPPDNQSRDISDSTTET), are a transit peptide targeting the mitochondrion. The disordered stretch occupies residues 27 to 74 (SQTRFLHPPDNQSRDISDSTTETISTLEFPHKTSVPNHSPLTSTSETE). The segment covering 60-72 (SVPNHSPLTSTSE) has biased composition (polar residues). PPR repeat units follow at residues 168 to 202 (TPRA…KVVP), 203 to 237 (FVPY…GVAG), 238 to 272 (DNVT…GAEP), 273 to 307 (DGLL…LGVP), 309 to 343 (SQET…GIPM), 344 to 378 (SVIA…GLAP), 379 to 413 (DKVM…RIAP), 414 to 444 (SSVL…SFES), 448 to 482 (HGFM…GIEP), 483 to 517 (NVVF…GLEP), 518 to 552 (NNFT…NFEA), 553 to 588 (NEVI…RYSM), 589 to 623 (SCTS…GKSP), 624 to 658 (NVVT…ELKL), 659 to 693 (DLPA…GLMP), 694 to 728 (NVSV…GISC), 729 to 763 (DLFT…GIVP), 764 to 798 (DEIL…DVTP), and 799 to 833 (NVLL…GIVH).

This sequence belongs to the PPR family. P subfamily. In terms of tissue distribution, expressed in lateral organ junctions and shoot apical meristem (SAM).

It is found in the mitochondrion. Involved in lateral organ development and boundary demarcation. The polypeptide is Pentatricopeptide repeat-containing protein At2g39230, mitochondrial (LOJ) (Arabidopsis thaliana (Mouse-ear cress)).